Consider the following 206-residue polypeptide: Holliday junction branch migration complex subunit RuvA (206 aa).

The segment at 1–64 (MIGRLTGNLV…ETSQQLFGFI (64 aa)) is domain I. The segment at 65 to 142 (DQQDREFFRM…SWQVTPSVDA (78 aa)) is domain II. Residues 143–154 (TGSLVALDSAAP) are flexible linker. Residues 155-206 (SQNAIVAEAESALVALGYKPVEASKAVARVTSDEITRSEDLIRLALRNMIPA) are domain III.

The protein belongs to the RuvA family. As to quaternary structure, homotetramer. Forms an RuvA(8)-RuvB(12)-Holliday junction (HJ) complex. HJ DNA is sandwiched between 2 RuvA tetramers; dsDNA enters through RuvA and exits via RuvB. An RuvB hexamer assembles on each DNA strand where it exits the tetramer. Each RuvB hexamer is contacted by two RuvA subunits (via domain III) on 2 adjacent RuvB subunits; this complex drives branch migration. In the full resolvosome a probable DNA-RuvA(4)-RuvB(12)-RuvC(2) complex forms which resolves the HJ.

The protein resides in the cytoplasm. The RuvA-RuvB-RuvC complex processes Holliday junction (HJ) DNA during genetic recombination and DNA repair, while the RuvA-RuvB complex plays an important role in the rescue of blocked DNA replication forks via replication fork reversal (RFR). RuvA specifically binds to HJ cruciform DNA, conferring on it an open structure. The RuvB hexamer acts as an ATP-dependent pump, pulling dsDNA into and through the RuvAB complex. HJ branch migration allows RuvC to scan DNA until it finds its consensus sequence, where it cleaves and resolves the cruciform DNA. This is Holliday junction branch migration complex subunit RuvA from Teredinibacter turnerae (strain ATCC 39867 / T7901).